Reading from the N-terminus, the 274-residue chain is Large ribosomal subunit protein uL2cz/uL2cy (274 aa).

Residues N224–A252 form a disordered region.

Belongs to the universal ribosomal protein uL2 family. In terms of assembly, part of the 50S ribosomal subunit.

The protein localises to the plastid. It is found in the chloroplast. This is Large ribosomal subunit protein uL2cz/uL2cy (rpl2-A) from Capsella bursa-pastoris (Shepherd's purse).